The chain runs to 263 residues: MKPKILLTNDDGITSTGLWAAYDALAPIADVTVVAPATQQSAVGRSISIFEPIRANQVTMNGVTAYSVGGKPTDAVIIGLFALRLNPDLVVSGVNIGENLSFESIMTSGTVGAALEAANQGVPSLAFSLQVEDQGDKFDDPSRIIDRYSDAKRVVRETCERVLANGFPGKAHVINVNIPARVRGGYEITRLAEKLFYTGVEERLDPRGRPYYWIDGPLYEDAEEGTDVHAVQRGNVSITPITLDCTAYAAADELKAIFDGMHI.

Asp-10, Asp-11, Ser-41, and Asn-95 together coordinate a divalent metal cation.

It belongs to the SurE nucleotidase family. It depends on a divalent metal cation as a cofactor.

Its subcellular location is the cytoplasm. It catalyses the reaction a ribonucleoside 5'-phosphate + H2O = a ribonucleoside + phosphate. Functionally, nucleotidase that shows phosphatase activity on nucleoside 5'-monophosphates. The polypeptide is 5'-nucleotidase SurE (Methanoculleus marisnigri (strain ATCC 35101 / DSM 1498 / JR1)).